A 183-amino-acid chain; its full sequence is UPF0098 protein YbcL (183 aa).

An N-terminal signal peptide occupies residues 1–21 (MKTLIVSTVLAFITFSAQAAA). C46 and C129 are oxidised to a cystine.

This sequence belongs to the UPF0098 family. Homodimer.

The protein localises to the periplasm. This Escherichia coli (strain K12) protein is UPF0098 protein YbcL (ybcL).